The primary structure comprises 206 residues: High frequency lysogenization protein HflD homolog (206 aa).

The protein belongs to the HflD family.

It localises to the cytoplasm. The protein localises to the cell inner membrane. The polypeptide is High frequency lysogenization protein HflD homolog (Pseudomonas savastanoi pv. phaseolicola (strain 1448A / Race 6) (Pseudomonas syringae pv. phaseolicola (strain 1448A / Race 6))).